Here is a 70-residue protein sequence, read N- to C-terminus: Cold shock-like protein CspJ (70 aa).

One can recognise a CSD domain in the interval 7-67; the sequence is GLVKWFNPEK…GPKGPSAVNV (61 aa).

It localises to the cytoplasm. The protein is Cold shock-like protein CspJ (cspJ) of Salmonella typhimurium (strain SL1344).